An 877-amino-acid chain; its full sequence is Phosphoenolpyruvate carboxylase (877 aa).

Residues His137 and Lys544 contribute to the active site.

It belongs to the PEPCase type 1 family. Mg(2+) is required as a cofactor.

It carries out the reaction oxaloacetate + phosphate = phosphoenolpyruvate + hydrogencarbonate. Functionally, forms oxaloacetate, a four-carbon dicarboxylic acid source for the tricarboxylic acid cycle. The protein is Phosphoenolpyruvate carboxylase of Edwardsiella ictaluri (strain 93-146).